The primary structure comprises 448 residues: N-succinylarginine dihydrolase (448 aa).

Substrate contacts are provided by residues 20-29, Asn-111, and 138-139; these read AGLLFGNEAS and HR. Glu-175 is a catalytic residue. Arg-213 contributes to the substrate binding site. His-249 is a catalytic residue. Substrate contacts are provided by Asp-251 and Asn-360. Cys-366 serves as the catalytic Nucleophile.

This sequence belongs to the succinylarginine dihydrolase family. Homodimer.

The catalysed reaction is N(2)-succinyl-L-arginine + 2 H2O + 2 H(+) = N(2)-succinyl-L-ornithine + 2 NH4(+) + CO2. It functions in the pathway amino-acid degradation; L-arginine degradation via AST pathway; L-glutamate and succinate from L-arginine: step 2/5. Its function is as follows. Catalyzes the hydrolysis of N(2)-succinylarginine into N(2)-succinylornithine, ammonia and CO(2). This Shigella dysenteriae serotype 1 (strain Sd197) protein is N-succinylarginine dihydrolase.